Here is a 120-residue protein sequence, read N- to C-terminus: ATP-dependent Clp protease adapter protein ClpS (120 aa).

Residues 1–27 are disordered; it reads MHAPSEIRLTFNQDRPQSNEDDGSGLA.

It belongs to the ClpS family. Binds to the N-terminal domain of the chaperone ClpA.

Functionally, involved in the modulation of the specificity of the ClpAP-mediated ATP-dependent protein degradation. The protein is ATP-dependent Clp protease adapter protein ClpS of Pseudomonas putida (strain GB-1).